Consider the following 319-residue polypeptide: Quinolinate synthase (319 aa).

Iminosuccinate-binding residues include H34 and S51. C96 contacts [4Fe-4S] cluster. Iminosuccinate-binding positions include 122–124 and S139; that span reads YIN. C182 serves as a coordination point for [4Fe-4S] cluster. Iminosuccinate-binding positions include 208–210 and T225; that span reads HPE. C276 contacts [4Fe-4S] cluster.

It belongs to the quinolinate synthase family. Type 2 subfamily. The cofactor is [4Fe-4S] cluster.

The protein resides in the cytoplasm. It carries out the reaction iminosuccinate + dihydroxyacetone phosphate = quinolinate + phosphate + 2 H2O + H(+). It participates in cofactor biosynthesis; NAD(+) biosynthesis; quinolinate from iminoaspartate: step 1/1. Catalyzes the condensation of iminoaspartate with dihydroxyacetone phosphate to form quinolinate. The chain is Quinolinate synthase from Thermosynechococcus vestitus (strain NIES-2133 / IAM M-273 / BP-1).